A 487-amino-acid polypeptide reads, in one-letter code: N-succinylglutamate 5-semialdehyde dehydrogenase (487 aa).

An NAD(+)-binding site is contributed by 221–226 (GSSDTG). Active-site residues include glutamate 244 and cysteine 278.

It belongs to the aldehyde dehydrogenase family. AstD subfamily.

The catalysed reaction is N-succinyl-L-glutamate 5-semialdehyde + NAD(+) + H2O = N-succinyl-L-glutamate + NADH + 2 H(+). It participates in amino-acid degradation; L-arginine degradation via AST pathway; L-glutamate and succinate from L-arginine: step 4/5. Its function is as follows. Catalyzes the NAD-dependent reduction of succinylglutamate semialdehyde into succinylglutamate. The polypeptide is N-succinylglutamate 5-semialdehyde dehydrogenase (Burkholderia multivorans (strain ATCC 17616 / 249)).